A 248-amino-acid chain; its full sequence is uncharacterized protein (248 aa).

An ABC transporter domain is found at 7–246 (VQLSNLSWTF…PASTILLPTS (240 aa)). Residue 43–50 (GQSGSGKS) coordinates ATP.

This sequence belongs to the ABC transporter superfamily.

This is an uncharacterized protein from Mycobacterium tuberculosis (strain CDC 1551 / Oshkosh).